Reading from the N-terminus, the 360-residue chain is Nicotinate-nucleotide--dimethylbenzimidazole phosphoribosyltransferase (360 aa).

Glu-327 acts as the Proton acceptor in catalysis.

It belongs to the CobT family.

The catalysed reaction is 5,6-dimethylbenzimidazole + nicotinate beta-D-ribonucleotide = alpha-ribazole 5'-phosphate + nicotinate + H(+). It participates in nucleoside biosynthesis; alpha-ribazole biosynthesis; alpha-ribazole from 5,6-dimethylbenzimidazole: step 1/2. In terms of biological role, catalyzes the synthesis of alpha-ribazole-5'-phosphate from nicotinate mononucleotide (NAMN) and 5,6-dimethylbenzimidazole (DMB). In Shewanella baltica (strain OS155 / ATCC BAA-1091), this protein is Nicotinate-nucleotide--dimethylbenzimidazole phosphoribosyltransferase.